A 175-amino-acid polypeptide reads, in one-letter code: MFIDKIKAKANNDEINVIIEIPMNSGPIKYEFDKESGAVFVDRFMQTTMSYPCNYGFIPHTLSNDGDPVDVLVVSHHPVVPGSVIKCRAVGVLMMEDESGFDEKIIAVPTSKLDITFDHIKELDDVCEMLKKRIVHFFEHYKDLEKGKWVKVTGWENKAKADSLIEEGIERVEKM.

K29, R43, and Y55 together coordinate substrate. 3 residues coordinate Mg(2+): D65, D70, and D102. Y141 contributes to the substrate binding site.

Belongs to the PPase family. In terms of assembly, homohexamer. It depends on Mg(2+) as a cofactor.

The protein resides in the cytoplasm. The enzyme catalyses diphosphate + H2O = 2 phosphate + H(+). Functionally, catalyzes the hydrolysis of inorganic pyrophosphate (PPi) forming two phosphate ions. The sequence is that of Inorganic pyrophosphatase from Rickettsia bellii (strain RML369-C).